The following is a 329-amino-acid chain: Beta-ketoacyl-[acyl-carrier-protein] synthase III (329 aa).

Active-site residues include C113 and H255. Positions 256–260 (QANQR) are ACP-binding. N285 is an active-site residue.

It belongs to the thiolase-like superfamily. FabH family. Homodimer.

The protein localises to the cytoplasm. It carries out the reaction malonyl-[ACP] + acetyl-CoA + H(+) = 3-oxobutanoyl-[ACP] + CO2 + CoA. It functions in the pathway lipid metabolism; fatty acid biosynthesis. Its function is as follows. Catalyzes the condensation reaction of fatty acid synthesis by the addition to an acyl acceptor of two carbons from malonyl-ACP. Catalyzes the first condensation reaction which initiates fatty acid synthesis and may therefore play a role in governing the total rate of fatty acid production. Possesses both acetoacetyl-ACP synthase and acetyl transacylase activities. Its substrate specificity determines the biosynthesis of branched-chain and/or straight-chain of fatty acids. This is Beta-ketoacyl-[acyl-carrier-protein] synthase III from Chlorobium luteolum (strain DSM 273 / BCRC 81028 / 2530) (Pelodictyon luteolum).